The following is a 224-amino-acid chain: UPF0758 protein VV1_0825 (224 aa).

Residues 1 to 20 are disordered; sequence MSLKNLPSESMPREKLLQRG. The MPN domain occupies 102–224; the sequence is ALTSPQHTKL…VVSFAERGWI (123 aa). Zn(2+) is bound by residues histidine 173, histidine 175, and aspartate 186. Positions 173–186 match the JAMM motif motif; sequence HNHPSGVAEPSQAD.

Belongs to the UPF0758 family.

The chain is UPF0758 protein VV1_0825 from Vibrio vulnificus (strain CMCP6).